The chain runs to 417 residues: Transmembrane protease serine 11G (417 aa).

Topologically, residues 1–21 (MYQPGILVRRKRVWKPWTVAL) are cytoplasmic. Residues 22-42 (ITVALLLALAVLIGLLVYFLV) traverse the membrane as a helical; Signal-anchor for type II membrane protein segment. At 43-417 (YDEKTHYYQA…RDWIKSKTSI (375 aa)) the chain is on the extracellular side. Residues 46–165 (KTHYYQASFW…PYLREMNAAQ (120 aa)) enclose the SEA domain. N60 carries N-linked (GlcNAc...) asparagine glycosylation. In terms of domain architecture, Peptidase S1 spans 186–416 (IADGKPADKA…YRDWIKSKTS (231 aa)). Cysteines 211 and 227 form a disulfide. Active-site charge relay system residues include H226 and D271. 2 disulfide bridges follow: C336–C352 and C363–C392. The active-site Charge relay system is S367.

Belongs to the peptidase S1 family.

The protein localises to the membrane. This Mus musculus (Mouse) protein is Transmembrane protease serine 11G (Tmprss11g).